A 296-amino-acid polypeptide reads, in one-letter code: Glycine--tRNA ligase alpha subunit (296 aa).

The protein belongs to the class-II aminoacyl-tRNA synthetase family. As to quaternary structure, tetramer of two alpha and two beta subunits.

Its subcellular location is the cytoplasm. It catalyses the reaction tRNA(Gly) + glycine + ATP = glycyl-tRNA(Gly) + AMP + diphosphate. In Parasynechococcus marenigrum (strain WH8102), this protein is Glycine--tRNA ligase alpha subunit.